Consider the following 403-residue polypeptide: Putative queuine tRNA-ribosyltransferase (403 aa).

Asp91 (proton acceptor) is an active-site residue. Substrate is bound by residues 91–95, Asp177, Gln218, and Gly245; that span reads DSGGF. The interval 275-281 is RNA binding; that stretch reads GIGAIED. The Nucleophile role is filled by Asp294. The interval 299 to 303 is RNA binding; important for wobble base 34 recognition; sequence ARWAR. Zn(2+) contacts are provided by Cys341, Cys343, Cys346, and His372.

Belongs to the queuine tRNA-ribosyltransferase family. In terms of assembly, homodimer. Within each dimer, one monomer is responsible for RNA recognition and catalysis, while the other monomer binds to the replacement base PreQ1. Zn(2+) is required as a cofactor.

The catalysed reaction is 7-aminomethyl-7-carbaguanine + guanosine(34) in tRNA = 7-aminomethyl-7-carbaguanosine(34) in tRNA + guanine. Catalyzes the base-exchange of a guanine (G) residue with the queuine precursor 7-aminomethyl-7-deazaguanine (PreQ1) at position 34 (anticodon wobble position) in tRNAs with GU(N) anticodons (tRNA-Asp, -Asn, -His and -Tyr). Catalysis occurs through a double-displacement mechanism. The nucleophile active site attacks the C1' of nucleotide 34 to detach the guanine base from the RNA, forming a covalent enzyme-RNA intermediate. The proton acceptor active site deprotonates the incoming PreQ1, allowing a nucleophilic attack on the C1' of the ribose to form the product. After dissociation, two additional enzymatic reactions on the tRNA convert PreQ1 to queuine (Q), resulting in the hypermodified nucleoside queuosine (7-(((4,5-cis-dihydroxy-2-cyclopenten-1-yl)amino)methyl)-7-deazaguanosine). The protein is Putative queuine tRNA-ribosyltransferase of Archaeoglobus fulgidus (strain ATCC 49558 / DSM 4304 / JCM 9628 / NBRC 100126 / VC-16).